The primary structure comprises 136 residues: ATP synthase epsilon chain (136 aa).

A disordered region spans residues 100-120 (QGALEEANRGEDKPNQLKASN). Over residues 105–114 (EANRGEDKPN) the composition is skewed to basic and acidic residues.

This sequence belongs to the ATPase epsilon chain family. In terms of assembly, F-type ATPases have 2 components, CF(1) - the catalytic core - and CF(0) - the membrane proton channel. CF(1) has five subunits: alpha(3), beta(3), gamma(1), delta(1), epsilon(1). CF(0) has three main subunits: a, b and c.

Its subcellular location is the cellular thylakoid membrane. Produces ATP from ADP in the presence of a proton gradient across the membrane. This is ATP synthase epsilon chain (atpC) from Synechocystis sp. (strain ATCC 27184 / PCC 6803 / Kazusa).